A 106-amino-acid chain; its full sequence is RNA-binding protein Hfq (106 aa).

The region spanning 9 to 68 (DPYLNALRKERVPVSIYLVNGIKLQGQIESFDAFVILLRNNISQMVYKHAVSTIVPSRNI) is the Sm domain. A disordered region spans residues 78–106 (EDEAGEEISAEYTPNAEGQAEATADPLYD).

Belongs to the Hfq family. As to quaternary structure, homohexamer.

Its function is as follows. RNA chaperone that binds small regulatory RNA (sRNAs) and mRNAs to facilitate mRNA translational regulation in response to envelope stress, environmental stress and changes in metabolite concentrations. Also binds with high specificity to tRNAs. The protein is RNA-binding protein Hfq of Dichelobacter nodosus (strain VCS1703A).